The chain runs to 150 residues: Large ribosomal subunit protein bL9 (150 aa).

This sequence belongs to the bacterial ribosomal protein bL9 family.

In terms of biological role, binds to the 23S rRNA. This Vibrio campbellii (strain ATCC BAA-1116) protein is Large ribosomal subunit protein bL9.